The primary structure comprises 534 residues: Lariat debranching enzyme (534 aa).

A divalent metal cation is bound by residues Cys8, His10, Asp39, and Asn84. Residues 124-154 (SGIFKGHDFLRGHHEFPPYTDSTCRSVYHVR) form a lariat recognition loop region. Positions 174, 226, and 228 each coordinate a divalent metal cation. Disordered regions lie at residues 242-275 (KLGD…PPPS) and 501-534 (TETP…AQED).

It belongs to the lariat debranching enzyme family. Fe(2+) serves as cofactor. Requires Zn(2+) as cofactor. It depends on Mn(2+) as a cofactor.

Its subcellular location is the nucleus. With respect to regulation, active in presence of diverse metals including Fe(2+), Zn(2+), Mn(2+). Binds two metal cations in two adjacent alpha and beta metal-binding pockets. Its function is as follows. Cleaves the 2'-5' phosphodiester linkage at the branch point of lariat intron pre-mRNAs after splicing and converts them into linear molecules that are subsequently degraded. It thereby facilitates ribonucleotide turnover. This chain is Lariat debranching enzyme (ldbr), found in Drosophila melanogaster (Fruit fly).